A 176-amino-acid chain; its full sequence is Protein GrpE (176 aa).

The protein belongs to the GrpE family. In terms of assembly, homodimer.

The protein resides in the cytoplasm. Participates actively in the response to hyperosmotic and heat shock by preventing the aggregation of stress-denatured proteins, in association with DnaK and GrpE. It is the nucleotide exchange factor for DnaK and may function as a thermosensor. Unfolded proteins bind initially to DnaJ; upon interaction with the DnaJ-bound protein, DnaK hydrolyzes its bound ATP, resulting in the formation of a stable complex. GrpE releases ADP from DnaK; ATP binding to DnaK triggers the release of the substrate protein, thus completing the reaction cycle. Several rounds of ATP-dependent interactions between DnaJ, DnaK and GrpE are required for fully efficient folding. The chain is Protein GrpE from Rickettsia bellii (strain OSU 85-389).